Reading from the N-terminus, the 183-residue chain is Hypoxanthine-guanine phosphoribosyltransferase (183 aa).

Diphosphate is bound by residues R47 and G48. 2 residues coordinate Mg(2+): E103 and D104. Residue D107 is the Proton acceptor of the active site. Residues K134, 155 to 156, and D162 each bind GMP; that span reads FV. Diphosphate is bound at residue R168.

It belongs to the purine/pyrimidine phosphoribosyltransferase family. The cofactor is Mg(2+).

It is found in the cytoplasm. The catalysed reaction is IMP + diphosphate = hypoxanthine + 5-phospho-alpha-D-ribose 1-diphosphate. The enzyme catalyses GMP + diphosphate = guanine + 5-phospho-alpha-D-ribose 1-diphosphate. It participates in purine metabolism; IMP biosynthesis via salvage pathway; IMP from hypoxanthine: step 1/1. It functions in the pathway purine metabolism; GMP biosynthesis via salvage pathway; GMP from guanine: step 1/1. In terms of biological role, purine salvage pathway enzyme that catalyzes the transfer of the ribosyl-5-phosphate group from 5-phospho-alpha-D-ribose 1-diphosphate (PRPP) to the N9 position of the 6-oxopurines hypoxanthine and guanine to form the corresponding ribonucleotides IMP (inosine 5'-monophosphate) and GMP (guanosine 5'-monophosphate), with the release of PPi. This chain is Hypoxanthine-guanine phosphoribosyltransferase (hpt), found in Lactococcus lactis subsp. lactis (strain IL1403) (Streptococcus lactis).